Consider the following 294-residue polypeptide: Cell division control protein 2 homolog 2 (294 aa).

The region spanning 4-287 is the Protein kinase domain; that stretch reads YEKVEKIGEG…ARGALEHEYF (284 aa). ATP-binding positions include 10 to 18 and lysine 33; that span reads IGEGTYGVV. Position 14 is a phosphothreonine (threonine 14). At tyrosine 15 the chain carries Phosphotyrosine. The active-site Proton acceptor is the aspartate 127. Threonine 161 carries the post-translational modification Phosphothreonine; by CAK.

Belongs to the protein kinase superfamily. CMGC Ser/Thr protein kinase family. CDC2/CDKX subfamily. Found in most organs including root, young leaf, stem, vegetative meristem and flower bud.

It catalyses the reaction L-seryl-[protein] + ATP = O-phospho-L-seryl-[protein] + ADP + H(+). The enzyme catalyses L-threonyl-[protein] + ATP = O-phospho-L-threonyl-[protein] + ADP + H(+). With respect to regulation, phosphorylation at Thr-14 or Tyr-15 inactivates the enzyme, while phosphorylation at Thr-161 activates it. Plays a key role in the control of the eukaryotic cell cycle. Component of the kinase complex that phosphorylates the repetitive C-terminus of RNA polymerase II. This Medicago sativa (Alfalfa) protein is Cell division control protein 2 homolog 2 (CDC2B).